The primary structure comprises 200 residues: MKSGDHAAIDVPESSAVAKGKAPLIATPREQKSGFKKGLGIFDFLLRLGAIIAALAAAATMGTSDETLPFFTQFFQFEASYDDLPTFMFFVIAMALIGGYLVLSLPFSIVTIVRPHAVAPRLLLFILDIVALTLTTAAGAAAAAIVYLAHNGNPNTNWLAICQQFGDFCQEVSGAVVASFVTVVVLMSLVLLSGVALKKH.

At 1–38 (MKSGDHAAIDVPESSAVAKGKAPLIATPREQKSGFKKG) the chain is on the cytoplasmic side. The chain crosses the membrane as a helical span at residues 39–59 (LGIFDFLLRLGAIIAALAAAA). The Extracellular segment spans residues 60–86 (TMGTSDETLPFFTQFFQFEASYDDLPT). Residues 87 to 107 (FMFFVIAMALIGGYLVLSLPF) form a helical membrane-spanning segment. At 108 to 121 (SIVTIVRPHAVAPR) the chain is on the cytoplasmic side. Residues 122–142 (LLLFILDIVALTLTTAAGAAA) form a helical membrane-spanning segment. The Extracellular portion of the chain corresponds to 143–171 (AAIVYLAHNGNPNTNWLAICQQFGDFCQE). Residues 172 to 192 (VSGAVVASFVTVVVLMSLVLL) form a helical membrane-spanning segment. Residues 193-200 (SGVALKKH) are Cytoplasmic-facing.

This sequence belongs to the Casparian strip membrane proteins (CASP) family. Homodimer and heterodimers.

It localises to the cell membrane. Its function is as follows. Regulates membrane-cell wall junctions and localized cell wall deposition. Required for establishment of the Casparian strip membrane domain (CSD) and the subsequent formation of Casparian strips, a cell wall modification of the root endodermis that determines an apoplastic barrier between the intraorganismal apoplasm and the extraorganismal apoplasm and prevents lateral diffusion. This Theobroma cacao (Cacao) protein is Casparian strip membrane protein 1.